The following is a 187-amino-acid chain: Elongation factor P 2 (187 aa).

It belongs to the elongation factor P family.

The protein localises to the cytoplasm. It functions in the pathway protein biosynthesis; polypeptide chain elongation. Involved in peptide bond synthesis. Stimulates efficient translation and peptide-bond synthesis on native or reconstituted 70S ribosomes in vitro. Probably functions indirectly by altering the affinity of the ribosome for aminoacyl-tRNA, thus increasing their reactivity as acceptors for peptidyl transferase. This Geobacter sulfurreducens (strain ATCC 51573 / DSM 12127 / PCA) protein is Elongation factor P 2.